The primary structure comprises 155 residues: uncharacterized protein (155 aa).

This is an uncharacterized protein from Rickettsia prowazekii (strain Madrid E).